The primary structure comprises 305 residues: DNA-directed RNA polymerase 35 kDa subunit (305 aa).

Belongs to the poxviridae DNA-directed RNA polymerase 35 kDa subunit family. As to quaternary structure, the DNA-dependent RNA polymerase used for intermediate and late genes expression consists of eight subunits 147 kDa, 133 kDa, 35 kDa, 30 kDa, 22 kDa, 19 kDa, 18 kDa and 7 kDa totalling more than 500 kDa in mass. The same holoenzyme, with the addition of the transcription-specificity factor RAP94, is used for early gene expression.

It localises to the virion. It carries out the reaction RNA(n) + a ribonucleoside 5'-triphosphate = RNA(n+1) + diphosphate. In terms of biological role, part of the DNA-dependent RNA polymerase which catalyzes the transcription of viral DNA into RNA using the four ribonucleoside triphosphates as substrates. Responsible for the transcription of early, intermediate and late genes. DNA-dependent RNA polymerase associates with the early transcription factor (ETF), itself composed of D6 and A7, thereby allowing the early genes transcription. Late transcription, and probably also intermediate transcription, require newly synthesized RNA polymerase. The chain is DNA-directed RNA polymerase 35 kDa subunit (OPG156) from Variola virus (isolate Human/India/Ind3/1967) (VARV).